Consider the following 507-residue polypeptide: Subtilisin-like protease 1 (507 aa).

Positions 1–19 are cleaved as a signal peptide; sequence MGVFRFISISLAAVSAANA. The propeptide occupies 20-116; that stretch reads AQILSMPHAQ…VEPDTIISVN (97 aa). The 80-residue stretch at 34–113 folds into the Inhibitor I9 domain; sequence SYIVMMKDDT…VMFVEPDTII (80 aa). Positions 126–400 constitute a Peptidase S8 domain; the sequence is SWGLARISNS…NVLISNGGAK (275 aa). Active-site charge relay system residues include Asp158 and His190. A disordered region spans residues 175–198; the sequence is GSNQVNDGDDRDGSGHGTHTSGTM. An N-linked (GlcNAc...) asparagine glycan is attached at Asn251. The segment covering 282–294 has biased composition (polar residues); that stretch reads NENQDARSSSPAS. A disordered region spans residues 282–312; that stretch reads NENQDARSSSPASEPSVCTVGSSAEDDSRSS. Ser345 serves as the catalytic Charge relay system. A compositionally biased stretch (polar residues) spans 378 to 394; it reads SSSITDVGPGTPTNVLI. The disordered stretch occupies residues 378–486; the sequence is SSSITDVGPG…YPGGDNFDFD (109 aa). 2 stretches are compositionally biased toward pro residues: residues 405-428 and 438-449; these read KPAP…PSQP and EPFPGEPFPGEP. Residues 450–461 are compositionally biased toward low complexity; the sequence is FPGESSPGESAP. A compositionally biased stretch (pro residues) spans 462-476; sequence APAPMPPSPQHPHTP.

Belongs to the peptidase S8 family.

The protein resides in the secreted. Its function is as follows. Secreted subtilisin-like serine protease with keratinolytic activity that contributes to pathogenicity. The sequence is that of Subtilisin-like protease 1 (SUB1) from Trichophyton equinum (Horse ringworm fungus).